The following is a 213-amino-acid chain: Phosphatidylserine decarboxylase proenzyme (213 aa).

S183 serves as the catalytic Schiff-base intermediate with substrate; via pyruvic acid. S183 carries the post-translational modification Pyruvic acid (Ser); by autocatalysis.

This sequence belongs to the phosphatidylserine decarboxylase family. PSD-A subfamily. As to quaternary structure, heterodimer of a large membrane-associated beta subunit and a small pyruvoyl-containing alpha subunit. It depends on pyruvate as a cofactor. In terms of processing, is synthesized initially as an inactive proenzyme. Formation of the active enzyme involves a self-maturation process in which the active site pyruvoyl group is generated from an internal serine residue via an autocatalytic post-translational modification. Two non-identical subunits are generated from the proenzyme in this reaction, and the pyruvate is formed at the N-terminus of the alpha chain, which is derived from the carboxyl end of the proenzyme. The post-translation cleavage follows an unusual pathway, termed non-hydrolytic serinolysis, in which the side chain hydroxyl group of the serine supplies its oxygen atom to form the C-terminus of the beta chain, while the remainder of the serine residue undergoes an oxidative deamination to produce ammonia and the pyruvoyl prosthetic group on the alpha chain.

The protein resides in the cell membrane. It catalyses the reaction a 1,2-diacyl-sn-glycero-3-phospho-L-serine + H(+) = a 1,2-diacyl-sn-glycero-3-phosphoethanolamine + CO2. It functions in the pathway phospholipid metabolism; phosphatidylethanolamine biosynthesis; phosphatidylethanolamine from CDP-diacylglycerol: step 2/2. Functionally, catalyzes the formation of phosphatidylethanolamine (PtdEtn) from phosphatidylserine (PtdSer). This chain is Phosphatidylserine decarboxylase proenzyme, found in Syntrophus aciditrophicus (strain SB).